The following is a 995-amino-acid chain: S1 RNA-binding domain-containing protein 1 (995 aa).

A disordered region spans residues 23–81 (SFSELSSASEEDDKEDSAWEPQKKVPRSRKQPPPKESKPKRMPRVKKNAPQISDGSEVV). Glycyl lysine isopeptide (Lys-Gly) (interchain with G-Cter in SUMO2) cross-links involve residues lysine 84 and lysine 134. The tract at residues 120–165 (CAAQPHTVRRTKKLKVEEETSKASNLEGESNSSETPSTSTVWGGTC) is disordered. Over residues 146 to 159 (EGESNSSETPSTST) the composition is skewed to low complexity. Glycyl lysine isopeptide (Lys-Gly) (interchain with G-Cter in SUMO2) cross-links involve residues lysine 166, lysine 167, and lysine 183. Lysine 185 participates in a covalent cross-link: Glycyl lysine isopeptide (Lys-Gly) (interchain with G-Cter in SUMO1); alternate. Residue lysine 185 forms a Glycyl lysine isopeptide (Lys-Gly) (interchain with G-Cter in SUMO2); alternate linkage. The stretch at 258–288 (ADSLREVQQTLEELRAVAKKVHSTIQKIKKE) forms a coiled coil. At serine 861 the chain carries Phosphoserine. An S1 motif domain is found at 919–992 (GTVLTGKVEN…PRSRITLDLI (74 aa)). Lysine 955 participates in a covalent cross-link: Glycyl lysine isopeptide (Lys-Gly) (interchain with G-Cter in SUMO2). Residue serine 964 is modified to Phosphoserine.

This chain is S1 RNA-binding domain-containing protein 1 (SRBD1), found in Homo sapiens (Human).